Here is a 209-residue protein sequence, read N- to C-terminus: Probable nicotinate-nucleotide adenylyltransferase (209 aa).

Belongs to the NadD family.

It carries out the reaction nicotinate beta-D-ribonucleotide + ATP + H(+) = deamido-NAD(+) + diphosphate. It functions in the pathway cofactor biosynthesis; NAD(+) biosynthesis; deamido-NAD(+) from nicotinate D-ribonucleotide: step 1/1. Catalyzes the reversible adenylation of nicotinate mononucleotide (NaMN) to nicotinic acid adenine dinucleotide (NaAD). The protein is Probable nicotinate-nucleotide adenylyltransferase of Hydrogenovibrio crunogenus (strain DSM 25203 / XCL-2) (Thiomicrospira crunogena).